A 94-amino-acid polypeptide reads, in one-letter code: Acylphosphatase (94 aa).

Residues 3 to 90 (RVHVIVEGRV…PDEKQFRIMY (88 aa)) enclose the Acylphosphatase-like domain. Active-site residues include Arg18 and Asn36.

The protein belongs to the acylphosphatase family.

The enzyme catalyses an acyl phosphate + H2O = a carboxylate + phosphate + H(+). The chain is Acylphosphatase (acyP) from Geobacillus thermodenitrificans (strain NG80-2).